The primary structure comprises 96 residues: Co-chaperonin GroES (96 aa).

Belongs to the GroES chaperonin family. As to quaternary structure, heptamer of 7 subunits arranged in a ring. Interacts with the chaperonin GroEL.

It localises to the cytoplasm. In terms of biological role, together with the chaperonin GroEL, plays an essential role in assisting protein folding. The GroEL-GroES system forms a nano-cage that allows encapsulation of the non-native substrate proteins and provides a physical environment optimized to promote and accelerate protein folding. GroES binds to the apical surface of the GroEL ring, thereby capping the opening of the GroEL channel. This Wolbachia pipientis wMel protein is Co-chaperonin GroES.